The following is a 559-amino-acid chain: Urocanate hydratase (559 aa).

Residues 49 to 50 (GG), Gln-127, 173 to 175 (GMG), Asp-193, Arg-198, 239 to 240 (NA), 260 to 264 (QTSAH), 270 to 271 (YL), and Tyr-319 each bind NAD(+). Residue Cys-407 is part of the active site. Residue Gly-489 coordinates NAD(+).

Belongs to the urocanase family. NAD(+) serves as cofactor.

Its subcellular location is the cytoplasm. The enzyme catalyses 4-imidazolone-5-propanoate = trans-urocanate + H2O. Its pathway is amino-acid degradation; L-histidine degradation into L-glutamate; N-formimidoyl-L-glutamate from L-histidine: step 2/3. Catalyzes the conversion of urocanate to 4-imidazolone-5-propionate. The protein is Urocanate hydratase of Shouchella clausii (strain KSM-K16) (Alkalihalobacillus clausii).